A 127-amino-acid polypeptide reads, in one-letter code: Glycine cleavage system H protein (127 aa).

The Lipoyl-binding domain occupies 22–104 (EVVIGITHFA…YEGAWMVKVE (83 aa)). N6-lipoyllysine is present on lysine 63.

It belongs to the GcvH family. The glycine cleavage system is composed of four proteins: P, T, L and H. (R)-lipoate is required as a cofactor.

The glycine cleavage system catalyzes the degradation of glycine. The H protein shuttles the methylamine group of glycine from the P protein to the T protein. In terms of biological role, is also involved in protein lipoylation via its role as an octanoyl/lipoyl carrier protein intermediate. In Bacillus cereus (strain G9842), this protein is Glycine cleavage system H protein.